The sequence spans 327 residues: Secondary metabolism regulator LAE1 (327 aa).

This sequence belongs to the methyltransferase superfamily. LaeA methyltransferase family.

Its subcellular location is the nucleus. It carries out the reaction L-methionyl-[protein] + S-adenosyl-L-methionine = S-methyl-L-methionyl-[protein] + S-adenosyl-L-homocysteine. In terms of biological role, secondary metabolism regulator that controls the expression of the tenuazonic acid biosynthesis cluster. Methyltransferase that performs automethylation. No other methyl-accepting substrate has been identified yet. The chain is Secondary metabolism regulator LAE1 from Pyricularia oryzae (strain 70-15 / ATCC MYA-4617 / FGSC 8958) (Rice blast fungus).